We begin with the raw amino-acid sequence, 449 residues long: MGKYFGTDGIRGVAGEDLTVELAYKLARAACYKLKDVDNKLIVIGKDTRISGDMLEAALISGITSMGFDVYRLGVIPTPAVAYLTRFYNACCGIVISASHNPYEFNGIKYFSNEGFKLKDSLEEEIEYLIDHQDEIDLKVTGEKVGRVYEEECARDTYINYLLSRVDLDLTGVKVSLDCGYGATSEIAPIIFNRLNADVTVTNTEYDGKNINFKCGSTNPEVISNLVKISESDMGFSFDGDGDRLIACDETGEIMDGDHVICAVGHFLKENNKLKNNAVVGTVMTNIGLIKSLKEIGVDVIKTQVGDRYVLEEMRKNGYIIGGEQSGHIIFIEDNTTGDGILSAIKLAEIAVKSKQKLSEMNNLMTSFPQVLVNAKVNNEYKKVYKDDEVINQKIAELEHEFKDEGRVLIRPSGTEPLIRVMIEGENQEYLEKKAIELKDLIEERCELI.

Catalysis depends on serine 99, which acts as the Phosphoserine intermediate. The Mg(2+) site is built by serine 99, aspartate 239, aspartate 241, and aspartate 243. The residue at position 99 (serine 99) is a Phosphoserine.

This sequence belongs to the phosphohexose mutase family. Mg(2+) is required as a cofactor. Activated by phosphorylation.

The enzyme catalyses alpha-D-glucosamine 1-phosphate = D-glucosamine 6-phosphate. Its function is as follows. Catalyzes the conversion of glucosamine-6-phosphate to glucosamine-1-phosphate. This is Phosphoglucosamine mutase from Finegoldia magna (strain ATCC 29328 / DSM 20472 / WAL 2508) (Peptostreptococcus magnus).